The primary structure comprises 94 residues: Large ribosomal subunit protein uL23 (94 aa).

The protein belongs to the universal ribosomal protein uL23 family. In terms of assembly, part of the 50S ribosomal subunit. Contacts protein L29, and trigger factor when it is bound to the ribosome.

One of the early assembly proteins it binds 23S rRNA. One of the proteins that surrounds the polypeptide exit tunnel on the outside of the ribosome. Forms the main docking site for trigger factor binding to the ribosome. In Symbiobacterium thermophilum (strain DSM 24528 / JCM 14929 / IAM 14863 / T), this protein is Large ribosomal subunit protein uL23.